Here is a 338-residue protein sequence, read N- to C-terminus: Citramalyl-CoA lyase, mitochondrial (338 aa).

A mitochondrion-targeting transit peptide spans 1-20 (MALCVLQNAVRGAAALPRLK). Residues Tyr48, Lys55, and Lys59 each contribute to the substrate site. Lys55, Lys59, and Lys64 each carry N6-acetyllysine. N6-acetyllysine; alternate occurs at positions 80 and 90. Residues Lys80 and Lys90 each carry the N6-succinyllysine; alternate modification. Position 105 (Arg105) interacts with substrate. Mg(2+) is bound by residues Glu169 and Asp204. 270-271 (IH) contacts substrate. Position 307 is an N6-succinyllysine (Lys307). Asp318 is a catalytic residue.

This sequence belongs to the HpcH/HpaI aldolase family. Citrate lyase beta subunit-like subfamily. Homotrimer. The cofactor is Mg(2+).

Its subcellular location is the mitochondrion. The enzyme catalyses glyoxylate + acetyl-CoA + H2O = (S)-malate + CoA + H(+). The catalysed reaction is propanoyl-CoA + glyoxylate + H2O = 3-methylmalate + CoA + H(+). It catalyses the reaction (3S)-citramalyl-CoA = pyruvate + acetyl-CoA. It carries out the reaction (S)-malyl-CoA + H2O = (S)-malate + CoA + H(+). Mitochondrial citramalyl-CoA lyase indirectly involved in the vitamin B12 metabolism. Converts citramalyl-CoA into acetyl-CoA and pyruvate in the C5-dicarboxylate catabolism pathway. The C5-dicarboxylate catabolism pathway is required to detoxify itaconate, a vitamin B12-poisoning metabolite. Also acts as a malate synthase in vitro, converting glyoxylate and acetyl-CoA to malate. Also displays malyl-CoA thioesterase activity. Also acts as a beta-methylmalate synthase in vitro, by mediating conversion of glyoxylate and propionyl-CoA to beta-methylmalate. Also has very weak citramalate synthase activity in vitro. This Rattus norvegicus (Rat) protein is Citramalyl-CoA lyase, mitochondrial (Clybl).